Consider the following 196-residue polypeptide: C-type lectin domain family 2 member F (196 aa).

A disordered region spans residues 1–21 (MNAQCLKKPEEGESSPGTGDK). Over 1–41 (MNAQCLKKPEEGESSPGTGDKILQRNSLRAISPESSAKLYC) the chain is Cytoplasmic. Residues 42 to 62 (CCGVIMVLTVAVVALSVALPA) traverse the membrane as a helical; Signal-anchor for type II membrane protein segment. Residues 63–196 (TKTEQILINK…SRSSNYMLQC (134 aa)) are Extracellular-facing. An intrachain disulfide couples Cys-77 to Cys-88. Residues 84–187 (VGNKCFYFSE…DYIPRKWICS (104 aa)) form the C-type lectin domain. Asn-97 is a glycosylation site (N-linked (GlcNAc...) asparagine). Cysteines 105 and 186 form a disulfide.

The protein resides in the cell membrane. Lectin-type cell surface receptor. This chain is C-type lectin domain family 2 member F (Clec2f), found in Mus musculus (Mouse).